We begin with the raw amino-acid sequence, 269 residues long: Autophagy-related protein 5 (269 aa).

Residue K102 forms a Glycyl lysine isopeptide (Lys-Gly) (interchain with G-Cter in ATG12) linkage.

The protein belongs to the ATG5 family. As to quaternary structure, conjugated with ATG12. The ATG5-ATG12 conjugate forms a complex with several units of ATG16. The ATG12-ATG5 conjugate also associates with ATG3. In terms of processing, conjugated to ATG12; which is essential for autophagy. Conjugation with ATG12 involves ATG7 as an E1-like activating enzyme and ATG10 as an E2-like conjugating enzyme.

It is found in the preautophagosomal structure membrane. Involved in cytoplasm to vacuole transport (Cvt) and autophagic vesicle formation. Autophagy is essential for maintenance of amino acid levels and protein synthesis under nitrogen starvation. Required for selective autophagic degradation of the nucleus (nucleophagy). Also required for mitophagy, which eliminates defective or superfluous mitochondria in order to fulfill cellular energy requirements and prevent excess ROS production. Conjugation with ATG12, through a ubiquitin-like conjugating system involving ATG7 as an E1-like activating enzyme and ATG10 as an E2-like conjugating enzyme, is essential for its function. The ATG12-ATG5 conjugate acts as an E3-like enzyme which is required for lipidation of ATG8 and ATG8 association to the vesicle membranes. ATG12-ATG5 rearranges the ATG3 catalytic center and enhances its E2 activity. Required for proper vegetative growth, asexual/sexual reproduction, but, unlike several plant and animal pathogenic fungi, where ATG5 is required for infection, in B.bassiana it is dispensable for pathogenesis. The sequence is that of Autophagy-related protein 5 from Beauveria bassiana (strain ARSEF 2860) (White muscardine disease fungus).